Reading from the N-terminus, the 178-residue chain is Cytochrome b6-f complex iron-sulfur subunit (178 aa).

Residues leucine 20 to isoleucine 42 form a helical membrane-spanning segment. The Rieske domain occupies threonine 71–valine 161. [2Fe-2S] cluster is bound by residues cysteine 107, histidine 109, cysteine 125, and histidine 128. Cysteine 112 and cysteine 127 form a disulfide bridge.

Belongs to the Rieske iron-sulfur protein family. As to quaternary structure, the 4 large subunits of the cytochrome b6-f complex are cytochrome b6, subunit IV (17 kDa polypeptide, PetD), cytochrome f and the Rieske protein, while the 4 small subunits are PetG, PetL, PetM and PetN. The complex functions as a dimer. [2Fe-2S] cluster serves as cofactor.

It localises to the cellular thylakoid membrane. It carries out the reaction 2 oxidized [plastocyanin] + a plastoquinol + 2 H(+)(in) = 2 reduced [plastocyanin] + a plastoquinone + 4 H(+)(out). In terms of biological role, component of the cytochrome b6-f complex, which mediates electron transfer between photosystem II (PSII) and photosystem I (PSI), cyclic electron flow around PSI, and state transitions. The sequence is that of Cytochrome b6-f complex iron-sulfur subunit from Synechococcus sp. (strain WH7803).